Reading from the N-terminus, the 450-residue chain is tRNA modification GTPase MnmE (450 aa).

(6S)-5-formyl-5,6,7,8-tetrahydrofolate is bound by residues arginine 26, glutamate 84, and lysine 123. A TrmE-type G domain is found at 219–376; that stretch reads GMHVVLVGQP…LKAKLLEMIG (158 aa). Residue asparagine 229 participates in K(+) binding. Residues 229 to 234, 248 to 254, 273 to 276, and 357 to 359 each bind GTP; these read NVGKSS, TDIAGTT, DTAG, and SAR. A Mg(2+)-binding site is contributed by serine 233. Residues threonine 248, isoleucine 250, and threonine 253 each contribute to the K(+) site. Threonine 254 is a binding site for Mg(2+). Lysine 450 is a (6S)-5-formyl-5,6,7,8-tetrahydrofolate binding site.

This sequence belongs to the TRAFAC class TrmE-Era-EngA-EngB-Septin-like GTPase superfamily. TrmE GTPase family. In terms of assembly, homodimer. Heterotetramer of two MnmE and two MnmG subunits. The cofactor is K(+).

It is found in the cytoplasm. Exhibits a very high intrinsic GTPase hydrolysis rate. Involved in the addition of a carboxymethylaminomethyl (cmnm) group at the wobble position (U34) of certain tRNAs, forming tRNA-cmnm(5)s(2)U34. The sequence is that of tRNA modification GTPase MnmE from Chromobacterium violaceum (strain ATCC 12472 / DSM 30191 / JCM 1249 / CCUG 213 / NBRC 12614 / NCIMB 9131 / NCTC 9757 / MK).